A 481-amino-acid chain; its full sequence is Surface lipoprotein assembly modifier 2 (481 aa).

A signal peptide spans 1–24 (MKNGVKQLFLLSLIGLSLTNVAWA). The segment at 24 to 192 (AEVARPKNDT…QYLLTLNQRN (169 aa)) is N-terminal domain. Positions 193–481 (QWIWQVGLNF…RIYLEIGKIF (289 aa)) are C-terminal probable beta barrel. 14 consecutive transmembrane segments (beta stranded) span residues 194–204 (WIWQVGLNFLN), 223–243 (AWEKESGQGVGYSLSVEKKWP), 248–257 (FFSKTMFNGN), 271–281 (TVRIGGGLGYQ), 285–295 (VEVSLFPFQEK), 315–325 (LGIRLENVDWL), 329–339 (WQISTALEYGE), 353–363 (YFVSSTLFYLP), 368–377 (FWFVGMDFHR), 390–399 (KTLRLGWGQD), 404–414 (ISSRLTFSYAN), 432–441 (YTTTITLWHR), 448–458 (LTPKLSWDYQK), and 471–481 (NRIYLEIGKIF).

Belongs to the Slam family.

The protein resides in the cell outer membrane. Its function is as follows. Required for correct export to the cell surface of some cell outer membrane lipoproteins. In Haemophilus influenzae (strain ATCC 51907 / DSM 11121 / KW20 / Rd), this protein is Surface lipoprotein assembly modifier 2.